The following is a 119-amino-acid chain: Large ribosomal subunit protein bL20 (119 aa).

The protein belongs to the bacterial ribosomal protein bL20 family.

Its function is as follows. Binds directly to 23S ribosomal RNA and is necessary for the in vitro assembly process of the 50S ribosomal subunit. It is not involved in the protein synthesizing functions of that subunit. In Rhodospirillum centenum (strain ATCC 51521 / SW), this protein is Large ribosomal subunit protein bL20.